We begin with the raw amino-acid sequence, 669 residues long: UvrABC system protein C (669 aa).

The 80-residue stretch at 16 to 95 (TNPGVYRFRD…IKEFKPRFNV (80 aa)) folds into the GIY-YIG domain. The UVR domain occupies 207–242 (KRFIGRLEKDMAAAVAELDYERAARVRDDIIALRKV).

This sequence belongs to the UvrC family. As to quaternary structure, interacts with UvrB in an incision complex.

It localises to the cytoplasm. Its function is as follows. The UvrABC repair system catalyzes the recognition and processing of DNA lesions. UvrC both incises the 5' and 3' sides of the lesion. The N-terminal half is responsible for the 3' incision and the C-terminal half is responsible for the 5' incision. This chain is UvrABC system protein C, found in Arthrobacter sp. (strain FB24).